Here is a 209-residue protein sequence, read N- to C-terminus: Ribosomal RNA large subunit methyltransferase E (209 aa).

S-adenosyl-L-methionine contacts are provided by Gly-63, Trp-65, Asp-83, Asp-99, and Asp-124. Lys-164 (proton acceptor) is an active-site residue.

It belongs to the class I-like SAM-binding methyltransferase superfamily. RNA methyltransferase RlmE family.

Its subcellular location is the cytoplasm. It carries out the reaction uridine(2552) in 23S rRNA + S-adenosyl-L-methionine = 2'-O-methyluridine(2552) in 23S rRNA + S-adenosyl-L-homocysteine + H(+). Specifically methylates the uridine in position 2552 of 23S rRNA at the 2'-O position of the ribose in the fully assembled 50S ribosomal subunit. This chain is Ribosomal RNA large subunit methyltransferase E, found in Serratia proteamaculans (strain 568).